Consider the following 170-residue polypeptide: Probable inactive uracil-DNA glycosylase, mitochondrial (170 aa).

The N-terminal 53 residues, 1-53, are a transit peptide targeting the mitochondrion; it reads MALSTPKTLMDFFQPAKRLKASPSSSSSFPAVSVAGRSRDLGSVANSPPRVTV.

It belongs to the uracil-DNA glycosylase (UDG) superfamily. UNG family.

Its subcellular location is the mitochondrion. In terms of biological role, probable inactive paralog of AtUNG (AC Q9LIH6) generated by a gene duplication event and subsequently disrupted by at least two transposon insertions. The chain is Probable inactive uracil-DNA glycosylase, mitochondrial from Arabidopsis thaliana (Mouse-ear cress).